The following is a 336-amino-acid chain: Phytochrome A-associated F-box protein (336 aa).

One can recognise an F-box domain in the interval 3 to 55 (ESVFSCIPEDVVFNIFFKLQDDPRNWARLACVCTKFSSIVRNVCCKTQCYSAI). The short motif at 197–201 (RKRRK) is the Nuclear localization signal element.

As to quaternary structure, probable component of an E3 ubiquitin ligase SCF complex. Interacts with SKP1A/ASK1 and SKP1B/ASK2.

It is found in the nucleus. The protein operates within protein modification; protein ubiquitination. Component of SCF(ASK-cullin-F-box) E3 ubiquitin ligase complexes, which may mediate the ubiquitination and subsequent proteasomal degradation of target proteins. Negative regulator of the phyA signaling pathway that shifts the responsiveness of the phyA signaling system associated with hypocotyl elongation from red to far-red wavelength. This Arabidopsis thaliana (Mouse-ear cress) protein is Phytochrome A-associated F-box protein (EID1).